Reading from the N-terminus, the 910-residue chain is 2-oxoglutarate dehydrogenase E1 component (910 aa).

It belongs to the alpha-ketoglutarate dehydrogenase family. As to quaternary structure, homodimer. Part of the 2-oxoglutarate dehydrogenase (OGDH) complex composed of E1 (2-oxoglutarate dehydrogenase), E2 (dihydrolipoamide succinyltransferase) and E3 (dihydrolipoamide dehydrogenase); the complex contains multiple copies of the three enzymatic components (E1, E2 and E3). The cofactor is thiamine diphosphate.

It carries out the reaction N(6)-[(R)-lipoyl]-L-lysyl-[protein] + 2-oxoglutarate + H(+) = N(6)-[(R)-S(8)-succinyldihydrolipoyl]-L-lysyl-[protein] + CO2. E1 component of the 2-oxoglutarate dehydrogenase (OGDH) complex which catalyzes the decarboxylation of 2-oxoglutarate, the first step in the conversion of 2-oxoglutarate to succinyl-CoA and CO(2). This chain is 2-oxoglutarate dehydrogenase E1 component, found in Staphylococcus aureus (strain N315).